Reading from the N-terminus, the 218-residue chain is MATRSLGVVISDDEPGYDLDLFCIPHHYAEDLEKVFIPHGLIMDRTERLARDVMKEMGGHHIVALCVLKGGYKFFADLLDYIKALNRNSDGSIPMTVDFIRLKSYCNDQSTGDIKVIGGDDLSTLTGKNVLIVEDIIDTGKTMQTLLSLVKEHNPKMVKVASLLVKRTPRSVGYKPDFVGFEIPDKFVVGYALDYNEYFRDLNHVCVISETGKAKYKA.

N-acetylalanine is present on A2. Residue K69 coordinates GMP. An N6-acetyllysine modification is found at K103. K115 participates in a covalent cross-link: Glycyl lysine isopeptide (Lys-Gly) (interchain with G-Cter in SUMO1); alternate. Residue K115 forms a Glycyl lysine isopeptide (Lys-Gly) (interchain with G-Cter in SUMO2); alternate linkage. GMP-binding positions include 134–142 (EDIIDTGKT), K166, 186–188 (KFV), and D194. D138 acts as the Proton acceptor in catalysis. T142 carries the post-translational modification Phosphothreonine. D194 lines the Mg(2+) pocket.

Belongs to the purine/pyrimidine phosphoribosyltransferase family. As to quaternary structure, homotetramer. It depends on Mg(2+) as a cofactor.

Its subcellular location is the cytoplasm. The catalysed reaction is IMP + diphosphate = hypoxanthine + 5-phospho-alpha-D-ribose 1-diphosphate. It catalyses the reaction GMP + diphosphate = guanine + 5-phospho-alpha-D-ribose 1-diphosphate. The protein operates within purine metabolism; IMP biosynthesis via salvage pathway; IMP from hypoxanthine: step 1/1. In terms of biological role, converts guanine to guanosine monophosphate, and hypoxanthine to inosine monophosphate. Transfers the 5-phosphoribosyl group from 5-phosphoribosylpyrophosphate onto the purine. Plays a central role in the generation of purine nucleotides through the purine salvage pathway. This is Hypoxanthine-guanine phosphoribosyltransferase (HPRT1) from Canis lupus familiaris (Dog).